The chain runs to 294 residues: 4-hydroxybenzoate octaprenyltransferase (294 aa).

Helical transmembrane passes span 20-42 (LLRI…ALWL), 98-118 (WEAV…VVLF), 120-140 (NTLT…YPFM), 145-165 (HLPQ…AWAA), 175-195 (WLLF…YAMV), 218-238 (AIIA…GQRA), 242-262 (SFYY…QYLA), and 274-294 (FLNN…DLAF).

The protein belongs to the UbiA prenyltransferase family. Mg(2+) is required as a cofactor.

Its subcellular location is the cell inner membrane. It carries out the reaction all-trans-octaprenyl diphosphate + 4-hydroxybenzoate = 4-hydroxy-3-(all-trans-octaprenyl)benzoate + diphosphate. The protein operates within cofactor biosynthesis; ubiquinone biosynthesis. Catalyzes the prenylation of para-hydroxybenzoate (PHB) with an all-trans polyprenyl group. Mediates the second step in the final reaction sequence of ubiquinone-8 (UQ-8) biosynthesis, which is the condensation of the polyisoprenoid side chain with PHB, generating the first membrane-bound Q intermediate 3-octaprenyl-4-hydroxybenzoate. The chain is 4-hydroxybenzoate octaprenyltransferase from Marinobacter nauticus (strain ATCC 700491 / DSM 11845 / VT8) (Marinobacter aquaeolei).